Consider the following 264-residue polypeptide: Cercarial protease (264 aa).

Residues 1 to 19 (MSNRWRFVVVVTLFTYCLT) form the signal peptide. Residues 20–27 (FERVSTWL) constitute a propeptide that is removed on maturation. A Peptidase S1 domain is found at 28–264 (IRSGEPVQHP…RMLDFVRSNI (237 aa)). Cys53 and Cys69 are disulfide-bonded. Active-site charge relay system residues include His68 and Asp126. The cysteines at positions 192 and 202 are disulfide-linked. The active-site Charge relay system is the Ser218.

Belongs to the peptidase S1 family. As to expression, acetabular (penetration) glands.

Activated by an autocatalytic mechanism. This protease cleaves elastin and thus facilitates penetration of schistosome parasite larvae through elastin-rich tissue of the host. The polypeptide is Cercarial protease (Schistosoma mansoni (Blood fluke)).